Consider the following 227-residue polypeptide: Riboflavin kinase (227 aa).

The H-T-H motif-like stretch occupies residues 1–92 (MSKDYEVFPL…LKRTIDSSTF (92 aa)). Residues 93–227 (LTLRGYVVPG…GDKVEVVIPV (135 aa)) are riboflavin kinase. Residue 102–107 (GLGEGA) participates in CDP binding. Residues threonine 131 and asparagine 133 each coordinate Mg(2+). Threonine 194 and glutamate 202 together coordinate FMN. CDP is bound at residue 207–210 (VRLR).

The protein belongs to the archaeal riboflavin kinase family. The cofactor is Mg(2+).

The catalysed reaction is riboflavin + CTP = CDP + FMN + H(+). The protein operates within cofactor biosynthesis; FMN biosynthesis; FMN from riboflavin (CTP route): step 1/1. Functionally, catalyzes the CTP-dependent phosphorylation of riboflavin (vitamin B2) to form flavin mononucleotide (FMN). The chain is Riboflavin kinase (ribK) from Thermofilum pendens (strain DSM 2475 / Hrk 5).